The chain runs to 606 residues: Thrombospondin-related anonymous protein (606 aa).

Residues 1–24 (MKLLGNSKYFFVVLLLCISVFLNG) form the signal peptide. One can recognise a VWFA domain in the interval 43-228 (DLHILLDGSG…TMIKPFLSKV (186 aa)). Residues 235 to 281 (VALCGKWEEWSECSTTCDNGTKIRKRKVLHPNCAGEMTAPCKVRDCP) enclose the TSP type-1 domain. The segment at 301–541 (PVEPIEPAEP…SKKQSKSNNG (241 aa)) is disordered. Low complexity-rich tracts occupy residues 409–425 (ENPF…IIAP), 440–450 (ELPNNLPESPS), and 459–479 (PNDN…IPNK). Basic and acidic residues-rich tracts occupy residues 487 to 504 (NPYK…RSND) and 516 to 532 (DKLE…ENKS). A helical transmembrane segment spans residues 544–564 (IAGGIIGGLAIIGCIGVGYNF).

In terms of assembly, interacts (via integrin-like A-domain) with Anopheles gambiae saglin/SG1F; the interaction probably promotes sporozoite invasion of salivary gland. Interacts (via integrin-like A-domain) with human AHSG; the interaction promotes sporozoite invasion of hepatocytes and formation of exoerythrocytic forms of parasites in human hepatoma HepG2 cells.

The protein localises to the cell membrane. It is found in the cytoplasm. Its function is as follows. Promotes parasite ability to invade host hepatocytes. Promotes parasite ability to invade mosquito salivary glands. Required for sporozoite gliding motility. This chain is Thrombospondin-related anonymous protein, found in Plasmodium berghei (strain Anka).